We begin with the raw amino-acid sequence, 326 residues long: UPF0324 membrane protein PBPRB0970 (326 aa).

The next 10 helical transmembrane spans lie at Phe27–Phe49, Leu70–Ala89, Gly94–Leu116, Gly123–Ile145, Ala155–Leu177, Phe184–Gly206, Ile216–Phe235, Ile242–Val261, Ile271–Ile290, and Leu303–Val325.

The protein belongs to the UPF0324 family.

Its subcellular location is the cell membrane. This is UPF0324 membrane protein PBPRB0970 from Photobacterium profundum (strain SS9).